Consider the following 98-residue polypeptide: Small ribosomal subunit protein bS6 (98 aa).

Belongs to the bacterial ribosomal protein bS6 family.

Functionally, binds together with bS18 to 16S ribosomal RNA. This chain is Small ribosomal subunit protein bS6, found in Lacticaseibacillus paracasei (strain ATCC 334 / BCRC 17002 / CCUG 31169 / CIP 107868 / KCTC 3260 / NRRL B-441) (Lactobacillus paracasei).